The primary structure comprises 143 residues: FIS1-related protein fis-1 (143 aa).

Residues 121–141 (LGLLGGAVAVVGGLVIAGLAF) form a helical membrane-spanning segment.

This sequence belongs to the FIS1 family.

It localises to the mitochondrion outer membrane. Its subcellular location is the peroxisome membrane. Functionally, involved in the fragmentation of the mitochondrial network. Involved in perinuclear clustering of the mitochondrial network. Plays a role in removal of ultraviolet C radiation-induced mitochondrial DNA damage. May act, redundantly with fis-2, downstream of mitochondrial fission, before the fission products participate in either mitochondrial homeostasis, mitophagy, or apoptosis. This Caenorhabditis elegans protein is FIS1-related protein fis-1.